The sequence spans 537 residues: Zinc finger protein 703 (537 aa).

Disordered regions lie at residues 1–38 (MNCS…LRQA), 90–254 (SQIG…VAPV), and 300–323 (VGNQ…LTGA). Positions 101–111 (SKLNSVTSSGL) are enriched in polar residues. Over residues 149–158 (GSSSGGAADK) the composition is skewed to low complexity. Residues 176-185 (SPSSRVSSPG) show a composition bias toward polar residues. The span at 188-203 (CDSKNNESQEKKEPEA) shows a compositional bias: basic and acidic residues. The segment covering 205 to 220 (KANSETSQVNPTLTRA) has biased composition (polar residues). Residues 221–232 (STSNSSAESSQS) show a composition bias toward low complexity. The C2H2-type zinc-finger motif lies at 409-437 (HICNWVSASGPCDKRFSTSEELLAHLRTH).

Belongs to the Elbow/Noc family.

Its subcellular location is the nucleus. It localises to the cytoplasm. Its function is as follows. Transcriptional corepressor which does not bind directly to DNA and may regulate transcription through recruitment of histone deacetylases to gene promoters. Regulates cell adhesion, migration and proliferation. Involved in specification of the lateral neural plate border (NPB). May be required for segmental gene expression during hindbrain development. The chain is Zinc finger protein 703 (znf703) from Xenopus tropicalis (Western clawed frog).